A 185-amino-acid chain; its full sequence is MNHQAKRLWIEPIKGSRRKSNFFFASIILGGALGFLLVGFSSYIGRNLVPPLLSHQILFVPQGIVMCFYGIAGLFFSSYLWCTILFNVGGGYNKIMKKKEFYVFFAGVSQGKIVVFFLRVPLKNVQTIKMEVQESLFYSRHVLYMKVKGLPDIPLARTGDHFNLSEMEQKAAELAHFLRVSIEGF.

Helical transmembrane passes span 22 to 42, 57 to 77, and 101 to 121; these read FFFASIILGGALGFLLVGFSS, ILFVPQGIVMCFYGIAGLFFS, and FYVFFAGVSQGKIVVFFLRVP.

Belongs to the Ycf4 family.

Its subcellular location is the plastid. It is found in the chloroplast thylakoid membrane. Its function is as follows. Seems to be required for the assembly of the photosystem I complex. This Gnetum parvifolium (Small-leaved jointfir) protein is Photosystem I assembly protein Ycf4.